The chain runs to 412 residues: Multifunctional CCA protein (412 aa).

2 residues coordinate ATP: glycine 8 and arginine 11. The CTP site is built by glycine 8 and arginine 11. 2 residues coordinate Mg(2+): aspartate 21 and aspartate 23. ATP-binding residues include arginine 91, arginine 137, and arginine 140. CTP-binding residues include arginine 91, arginine 137, and arginine 140. Residues 228–329 (TGIHTMMVLE…VKLFDKADFW (102 aa)) enclose the HD domain.

This sequence belongs to the tRNA nucleotidyltransferase/poly(A) polymerase family. Bacterial CCA-adding enzyme type 1 subfamily. Monomer. Can also form homodimers and oligomers. Mg(2+) serves as cofactor. Ni(2+) is required as a cofactor.

The enzyme catalyses a tRNA precursor + 2 CTP + ATP = a tRNA with a 3' CCA end + 3 diphosphate. The catalysed reaction is a tRNA with a 3' CCA end + 2 CTP + ATP = a tRNA with a 3' CCACCA end + 3 diphosphate. Catalyzes the addition and repair of the essential 3'-terminal CCA sequence in tRNAs without using a nucleic acid template. Adds these three nucleotides in the order of C, C, and A to the tRNA nucleotide-73, using CTP and ATP as substrates and producing inorganic pyrophosphate. tRNA 3'-terminal CCA addition is required both for tRNA processing and repair. Also involved in tRNA surveillance by mediating tandem CCA addition to generate a CCACCA at the 3' terminus of unstable tRNAs. While stable tRNAs receive only 3'-terminal CCA, unstable tRNAs are marked with CCACCA and rapidly degraded. The chain is Multifunctional CCA protein from Shewanella pealeana (strain ATCC 700345 / ANG-SQ1).